The following is a 229-amino-acid chain: ATP synthase subunit a 3 (229 aa).

Transmembrane regions (helical) follow at residues 25–45, 86–106, 111–131, 142–162, 181–201, and 202–222; these read ADAVSYTWLIIALLLLLSFLA, VATIGIFVLVSNLIGLIPGFF, NINTTAACAIVVFLSTHVVGI, FCGPILWLTPIMFFIEVIGHL, LVLIIFFGLAPFLVPLPMMLM, and GVLVSFIQAFVFMLLTMIYIQ.

The protein belongs to the ATPase A chain family. As to quaternary structure, F-type ATPases have 2 components, CF(1) - the catalytic core - and CF(0) - the membrane proton channel. CF(1) has five subunits: alpha(3), beta(3), gamma(1), delta(1), epsilon(1). CF(0) has three main subunits: a(1), b(2) and c(9-12). The alpha and beta chains form an alternating ring which encloses part of the gamma chain. CF(1) is attached to CF(0) by a central stalk formed by the gamma and epsilon chains, while a peripheral stalk is formed by the delta and b chains.

It localises to the cell inner membrane. Key component of the proton channel; it plays a direct role in the translocation of protons across the membrane. This is ATP synthase subunit a 3 from Pelobacter propionicus (strain DSM 2379 / NBRC 103807 / OttBd1).